The chain runs to 56 residues: Small ribosomal subunit protein uS14 (56 aa).

Positions 21, 24, 39, and 42 each coordinate Zn(2+).

This sequence belongs to the universal ribosomal protein uS14 family. Zn(2+) is required as a cofactor.

This is Small ribosomal subunit protein uS14 (rps29A) from Guillardia theta (Cryptophyte).